The following is a 91-amino-acid chain: Probable Fe(2+)-trafficking protein (91 aa).

This sequence belongs to the Fe(2+)-trafficking protein family.

In terms of biological role, could be a mediator in iron transactions between iron acquisition and iron-requiring processes, such as synthesis and/or repair of Fe-S clusters in biosynthetic enzymes. This is Probable Fe(2+)-trafficking protein from Burkholderia cenocepacia (strain ATCC BAA-245 / DSM 16553 / LMG 16656 / NCTC 13227 / J2315 / CF5610) (Burkholderia cepacia (strain J2315)).